Here is a 344-residue protein sequence, read N- to C-terminus: MTDRVIRVLVVDDSAFMRMVLKDIIDSQPDMKVVGFAKDGLEAVEKAIELKPDVITMDIEMPNLNGIEALKLIMKKAPTRVIMVSSLTEEGAAITIEALRNGAVDFITKPHGSISLTFRQVAPELLEKIRQAMNVDPRTLLFKPKVSRLTITKPAVSGKIVVIGSSTGGPRSLDMIIPNLPKNFPAPIVVVQHMPPGFTKSLAMRLDSTSELTVKEAEDGEEVKPGFVYIAPGDFHLGLKAQNGKVFFFLDKSDKINNVRPAVDFTLDKAAEIYKSKTIAVILTGMGKDGTKGAFKVKFYGGTVIAEDKETCVVFGMPKSVIEEGYADYVLPAYKIPEKLIELV.

Residues 7–124 (RVLVVDDSAF…SLTFRQVAPE (118 aa)) form the Response regulatory domain. Position 58 is a 4-aspartylphosphate (Asp58). The region spanning 154–344 (PAVSGKIVVI…KIPEKLIELV (191 aa)) is the CheB-type methylesterase domain. Catalysis depends on residues Ser166, His193, and Asp289.

It belongs to the CheB family. Post-translationally, phosphorylated by CheA. Phosphorylation of the N-terminal regulatory domain activates the methylesterase activity.

Its subcellular location is the cytoplasm. It carries out the reaction [protein]-L-glutamate 5-O-methyl ester + H2O = L-glutamyl-[protein] + methanol + H(+). It catalyses the reaction L-glutaminyl-[protein] + H2O = L-glutamyl-[protein] + NH4(+). In terms of biological role, involved in chemotaxis. Part of a chemotaxis signal transduction system that modulates chemotaxis in response to various stimuli. Catalyzes the demethylation of specific methylglutamate residues introduced into the chemoreceptors (methyl-accepting chemotaxis proteins or MCP) by CheR. Also mediates the irreversible deamidation of specific glutamine residues to glutamic acid. In Thermotoga maritima (strain ATCC 43589 / DSM 3109 / JCM 10099 / NBRC 100826 / MSB8), this protein is Protein-glutamate methylesterase/protein-glutamine glutaminase.